Reading from the N-terminus, the 155-residue chain is Ribosome maturation factor RimP (155 aa).

The protein belongs to the RimP family.

The protein resides in the cytoplasm. Required for maturation of 30S ribosomal subunits. The chain is Ribosome maturation factor RimP from Staphylococcus aureus (strain bovine RF122 / ET3-1).